The following is a 104-amino-acid chain: MLTEITFFERFEHDILMGKKTITLRNEAESHVIPGQILPVSTFETHRWFCDIQVLEVTPITLSGLTTLHAQQENMTLAELRLVIAEIYPDLEQLYMIRFKVLTK.

The ASCH domain occupies 6-101 (TFFERFEHDI…EQLYMIRFKV (96 aa)). Residue lysine 20 is the Proton acceptor of the active site. Threonine 23 serves as the catalytic Nucleophile. The active-site Proton donor is glutamate 73.

It belongs to the N(4)-acetylcytidine amidohydrolase family.

The catalysed reaction is N(4)-acetylcytidine + H2O = cytidine + acetate + H(+). It carries out the reaction N(4)-acetyl-2'-deoxycytidine + H2O = 2'-deoxycytidine + acetate + H(+). It catalyses the reaction N(4)-acetylcytosine + H2O = cytosine + acetate + H(+). In terms of biological role, catalyzes the hydrolysis of N(4)-acetylcytidine (ac4C). The sequence is that of N(4)-acetylcytidine amidohydrolase from Shewanella oneidensis (strain ATCC 700550 / JCM 31522 / CIP 106686 / LMG 19005 / NCIMB 14063 / MR-1).